Here is a 1378-residue protein sequence, read N- to C-terminus: Tonsoku-like protein (1378 aa).

TPR repeat units lie at residues 27–60 (AALC…RERA), 67–100 (AVAH…AHSL), 107–147 (QRAW…VDEE), 162–195 (TRLY…AEQN), 202–235 (FRAR…AHTM), 242–275 (SECC…GSQK), 311–344 (MVIC…AELL), and 352–385 (AIIH…RSGN). The disordered stretch occupies residues 475–524 (AATAESEALEAGEVELSEGEDDTDGLTPQLEEDEELQGHLGRRKGSKWNR). Residues 481 to 509 (EALEAGEVELSEGEDDTDGLTPQLEEDEE) are compositionally biased toward acidic residues. Positions 514–523 (LGRRKGSKWN) are enriched in basic residues. ANK repeat units follow at residues 528-557 (MGET…PLNP), 561-590 (CGWT…AVDD), and 597-626 (EGIT…SVTL). The tract at residues 667–789 (AASGQDPHSS…REAATASTSR (123 aa)) is disordered. Polar residues predominate over residues 672 to 684 (DPHSSQAFHTPSS). Pro residues predominate over residues 691 to 702 (TSPPLSPCPEPP). Serine 719 is subject to Phosphoserine. Composition is skewed to low complexity over residues 736–753 (GPAS…AGPA) and 777–789 (ASNR…STSR). Residue arginine 797 is modified to Omega-N-methylarginine. Residues 842 to 933 (LTRSRRPRPR…PLGPAPPPPI (92 aa)) form a disordered region. Composition is skewed to polar residues over residues 883 to 899 (CMQS…SSLA) and 907 to 918 (STPRVSEPSGDS). 7 LRR repeats span residues 1069 to 1093 (HTAL…LVAA), 1097 to 1122 (MPSL…AMGL), 1128 to 1151 (LQSL…SLAS), 1188 to 1212 (AEHL…TLQS), 1247 to 1270 (GCAL…DLCR), 1275 to 1300 (CPSL…LLST), and 1331 to 1354 (AAQL…ALRQ).

It belongs to the Tonsoku family. As to quaternary structure, component of the MMS22L-TONSL complex, a complex at least composed of MMS22L and TONSL/NFKBIL2. Interacts with the MCM complex, the FACT complex and the RPA complex. Interacts with MCM5; the interaction is direct. Binds histones, with a strong preference for histone H3.1 (histones H3.1 and H3-4/H3.1t). Interacts (via ANK repeats) with histone H4; specifically binds histone H4 lacking methylation at 'Lys-20' (H4K20me0). May interact with DNAJC9; the interaction seems to be histone-dependent. Expressed in heart, skeletal muscle and tracheal epithelial cells.

The protein resides in the nucleus. The protein localises to the chromosome. It localises to the cytoplasm. Its function is as follows. Component of the MMS22L-TONSL complex, a complex that promotes homologous recombination-mediated repair of double-strand breaks (DSBs) at stalled or collapsed replication forks. The MMS22L-TONSL complex is required to maintain genome integrity during DNA replication. It mediates the assembly of RAD51 filaments on single-stranded DNA (ssDNA): the MMS22L-TONSL complex is recruited to DSBs following histone replacement by histone chaperones and eviction of the replication protein A complex (RPA/RP-A) from DSBs. Following recruitment to DSBs, the TONSL-MMS22L complex promotes recruitment of RAD51 filaments and subsequent homologous recombination. Within the complex, TONSL acts as a histone reader, which recognizes and binds newly synthesized histones following their replacement by histone chaperones. Specifically binds histone H4 lacking methylation at 'Lys-20' (H4K20me0) and histone H3.1. In Homo sapiens (Human), this protein is Tonsoku-like protein.